A 374-amino-acid chain; its full sequence is Protein-glutamate methylesterase/protein-glutamine glutaminase 1 (374 aa).

Residues 4 to 121 (KVLVVDDSSF…ATNKDEAILL (118 aa)) enclose the Response regulatory domain. D55 is subject to 4-aspartylphosphate. The tract at residues 141–170 (PSVAPVTPRPTTGSAVGNATTPVQSASAPV) is disordered. Positions 149 to 167 (RPTTGSAVGNATTPVQSAS) are enriched in polar residues. Residues 174–374 (PLSSIRASGK…ESILKESARG (201 aa)) enclose the CheB-type methylesterase domain. Catalysis depends on residues S193, H220, and D316.

Belongs to the CheB family. In terms of processing, phosphorylated by CheA. Phosphorylation of the N-terminal regulatory domain activates the methylesterase activity.

It localises to the cytoplasm. It carries out the reaction [protein]-L-glutamate 5-O-methyl ester + H2O = L-glutamyl-[protein] + methanol + H(+). The enzyme catalyses L-glutaminyl-[protein] + H2O = L-glutamyl-[protein] + NH4(+). Its function is as follows. Involved in chemotaxis. Part of a chemotaxis signal transduction system that modulates chemotaxis in response to various stimuli. Catalyzes the demethylation of specific methylglutamate residues introduced into the chemoreceptors (methyl-accepting chemotaxis proteins or MCP) by CheR. Also mediates the irreversible deamidation of specific glutamine residues to glutamic acid. The polypeptide is Protein-glutamate methylesterase/protein-glutamine glutaminase 1 (Shewanella oneidensis (strain ATCC 700550 / JCM 31522 / CIP 106686 / LMG 19005 / NCIMB 14063 / MR-1)).